Reading from the N-terminus, the 289-residue chain is Survival motor neuron protein (289 aa).

Residues 1–10 (MAMGSGGGAG) show a composition bias toward gly residues. Positions 1–27 (MAMGSGGGAGSEQEDTVLFRRGTGQSD) are disordered. Residues 11–42 (SEQEDTVLFRRGTGQSDDSDIWDDTALIKAYD) form a P1 (binding site for GEMIN2) region. Phosphothreonine is present on Thr-23. Phosphoserine occurs at positions 26 and 29. Lys-49 participates in a covalent cross-link: Glycyl lysine isopeptide (Lys-Gly) (interchain with G-Cter in SUMO2). Residues 55 to 88 (GDMCETSDKPKGTARRKPAKKNKNQKKNATAPLK) form a disordered region. The span at 66–80 (GTARRKPAKKNKNQK) shows a compositional bias: basic residues. Thr-67 is modified (phosphothreonine). The Tudor domain occupies 89–149 (QWKAGDKCSA…LSPTCEVANN (61 aa)). A required for interaction with RPP20/POP7 region spans residues 95 to 205 (KCSAVWSEDG…VPGAGLGPGK (111 aa)). The interval 150 to 226 (TEQNTQENES…PPPPPPFLPC (77 aa)) is disordered. The span at 171–181 (RSLRSKAHSKS) shows a compositional bias: basic residues. Lys-205 is covalently cross-linked (Glycyl lysine isopeptide (Lys-Gly) (interchain with G-Cter in SUMO2)). The span at 212 to 226 (GPPPPPPPPPPFLPC) shows a compositional bias: pro residues. The P2 (binding site for SM B) stretch occupies residues 235–262 (PPIIPPPPPISPDCLDDTDALGSMLISW). A required for interaction with SYNCRIP region spans residues 274–289 (GFRQNKKEGKKCSHTN).

This sequence belongs to the SMN family. As to quaternary structure, homooligomer; may form higher order homooligomers in the dimer to octamer range. Part of the core SMN complex that contains SMN1, GEMIN2/SIP1, DDX20/GEMIN3, GEMIN4, GEMIN5, GEMIN6, GEMIN7, GEMIN8 and STRAP/UNRIP. Part of the SMN-Sm complex that contains SMN1, GEMIN2/SIP1, DDX20/GEMIN3, GEMIN4, GEMIN5, GEMIN6, GEMIN7, GEMIN8, STRAP/UNRIP and the Sm proteins SNRPB, SNRPD1, SNRPD2, SNRPD3, SNRPE, SNRPF and SNRPG. Component of an import snRNP complex composed of KPNB1, RNUT1, SMN1 and ZNF259. Interacts with DDX20, FBL, NOLA1, RNUT1 and with several spliceosomal snRNP core Sm proteins, including SNRPB, SNRPD1, SNRPD2, SNRPD3, SNRPE and ILF3. Interacts with GEMIN2; the interaction is direct. Interacts with GEMIN3; the interaction is direct. Interacts with GEMIN8; the interaction is direct. Interacts with SNRPB; the interaction is direct. Interacts (via Tudor domain) with SNRPD1 (via C-terminus); the interaction is direct. Interacts with SNRPD2; the interaction is direct. Interacts (via Tudor domain) with SNRPD3 (via C-terminus); the interaction is direct. Interacts with SNRPE; the interaction is direct. Interacts with OSTF1, LSM10, LSM11 and RPP20/POP7. Interacts (via C-terminal region) with ZPR1 (via C-terminal region). Interacts (via Tudor domain) with COIL. Interacts with SETX; recruits SETX to POLR2A. Interacts with POLR2A (via the C-terminal domain (CTD)). Interacts with PRMT5. Interacts with XRN2. Interacts (via C-terminus) with FMR1 (via C-terminus); the interaction is direct and occurs in a RNA-independent manner. Interacts with SYNCRIP. Interacts (via Tudor domain) with SF3B2 (methylated form). Interacts with WRAP53/TCAB1. Interacts (via Tudor domain) with ELAVL4 in an RNA-independent manner; the interaction is required for localization of ELAVL4 to RNA granules. Interacts with FRG1.

It localises to the nucleus. The protein resides in the gem. It is found in the cajal body. Its subcellular location is the cytoplasm. The protein localises to the cytoplasmic granule. It localises to the perikaryon. The protein resides in the cell projection. It is found in the neuron projection. Its subcellular location is the axon. The protein localises to the myofibril. It localises to the sarcomere. The protein resides in the z line. Functionally, the SMN complex catalyzes the assembly of small nuclear ribonucleoproteins (snRNPs), the building blocks of the spliceosome, and thereby plays an important role in the splicing of cellular pre-mRNAs. Most spliceosomal snRNPs contain a common set of Sm proteins SNRPB, SNRPD1, SNRPD2, SNRPD3, SNRPE, SNRPF and SNRPG that assemble in a heptameric protein ring on the Sm site of the small nuclear RNA to form the core snRNP (Sm core). In the cytosol, the Sm proteins SNRPD1, SNRPD2, SNRPE, SNRPF and SNRPG are trapped in an inactive 6S pICln-Sm complex by the chaperone CLNS1A that controls the assembly of the core snRNP. To assemble core snRNPs, the SMN complex accepts the trapped 5Sm proteins from CLNS1A forming an intermediate. Binding of snRNA inside 5Sm ultimately triggers eviction of the SMN complex, thereby allowing binding of SNRPD3 and SNRPB to complete assembly of the core snRNP. Within the SMN complex, SMN1 acts as a structural backbone and together with GEMIN2 it gathers the Sm complex subunits. Ensures the correct splicing of U12 intron-containing genes that may be important for normal motor and proprioceptive neurons development. Also required for resolving RNA-DNA hybrids created by RNA polymerase II, that form R-loop in transcription terminal regions, an important step in proper transcription termination. May also play a role in the metabolism of small nucleolar ribonucleoprotein (snoRNPs). The sequence is that of Survival motor neuron protein (Smn1) from Rattus norvegicus (Rat).